The chain runs to 587 residues: UDP-N-acetylmuramoylalanine--D-glutamate ligase (587 aa).

The tract at residues 124-147 (DHLVPPESPLSDASDISDASDATD) is disordered. Positions 132-147 (PLSDASDISDASDATD) are enriched in low complexity. Residue 214 to 220 (GTNGKTT) coordinates ATP.

This sequence belongs to the MurCDEF family.

Its subcellular location is the cytoplasm. The catalysed reaction is UDP-N-acetyl-alpha-D-muramoyl-L-alanine + D-glutamate + ATP = UDP-N-acetyl-alpha-D-muramoyl-L-alanyl-D-glutamate + ADP + phosphate + H(+). Its pathway is cell wall biogenesis; peptidoglycan biosynthesis. Cell wall formation. Catalyzes the addition of glutamate to the nucleotide precursor UDP-N-acetylmuramoyl-L-alanine (UMA). The protein is UDP-N-acetylmuramoylalanine--D-glutamate ligase of Polaromonas sp. (strain JS666 / ATCC BAA-500).